The following is a 426-amino-acid chain: UDP-N-acetylglucosamine 1-carboxyvinyltransferase (426 aa).

Position 24 to 25 (24 to 25 (KN)) interacts with phosphoenolpyruvate. A UDP-N-acetyl-alpha-D-glucosamine-binding site is contributed by arginine 95. Cysteine 119 acts as the Proton donor in catalysis. Cysteine 119 is modified (2-(S-cysteinyl)pyruvic acid O-phosphothioketal). Residues 124-128 (RPVDQ), aspartate 308, and valine 330 contribute to the UDP-N-acetyl-alpha-D-glucosamine site.

It belongs to the EPSP synthase family. MurA subfamily.

The protein localises to the cytoplasm. The catalysed reaction is phosphoenolpyruvate + UDP-N-acetyl-alpha-D-glucosamine = UDP-N-acetyl-3-O-(1-carboxyvinyl)-alpha-D-glucosamine + phosphate. It participates in cell wall biogenesis; peptidoglycan biosynthesis. In terms of biological role, cell wall formation. Adds enolpyruvyl to UDP-N-acetylglucosamine. This is UDP-N-acetylglucosamine 1-carboxyvinyltransferase from Deinococcus radiodurans (strain ATCC 13939 / DSM 20539 / JCM 16871 / CCUG 27074 / LMG 4051 / NBRC 15346 / NCIMB 9279 / VKM B-1422 / R1).